We begin with the raw amino-acid sequence, 729 residues long: Polyribonucleotide nucleotidyltransferase (729 aa).

Mg(2+) is bound by residues D516 and D522. A KH domain is found at 581–641; the sequence is PSTEHFSINP…EKVAAAKEHI (61 aa). Residues 658-725 form the S1 motif domain; the sequence is GKTYVGKVKK…KGKKVELATP (68 aa).

It belongs to the polyribonucleotide nucleotidyltransferase family. The cofactor is Mg(2+).

It is found in the cytoplasm. It catalyses the reaction RNA(n+1) + phosphate = RNA(n) + a ribonucleoside 5'-diphosphate. Involved in mRNA degradation. Catalyzes the phosphorolysis of single-stranded polyribonucleotides processively in the 3'- to 5'-direction. This Sulfurovum sp. (strain NBC37-1) protein is Polyribonucleotide nucleotidyltransferase.